The following is a 511-amino-acid chain: Maturase K (511 aa).

The protein belongs to the intron maturase 2 family. MatK subfamily.

It localises to the plastid. The protein resides in the chloroplast. Usually encoded in the trnK tRNA gene intron. Probably assists in splicing its own and other chloroplast group II introns. The polypeptide is Maturase K (Chloranthus spicatus (Chulantree)).